The primary structure comprises 94 residues: Protein canopy homolog 1 (94 aa).

The protein belongs to the canopy family.

This is Protein canopy homolog 1 (Cnpy1) from Mus musculus (Mouse).